Reading from the N-terminus, the 756-residue chain is MLIHEDNRYIVEKEYNLVTEPQNASLFTTGNGYMGVRGSLEEFGSTRIQGSFIRGFVDEIIEVIEPFCDNEYMKKYYFDEEKLKKFDKQISCINLVDFLLIRFRIGDEIFYPWEGEILSWERRLDTSQSIFQRSVTWKDKMGNITVFEFERFASYDEEHRYCMRAMAKPQNHFLPVEIISGIDTDVRTGGQRVLQFINNQILNNGLISCFQSGKRYGITCKIAVKNSFFMDGKLQHSIGEQQENLLLNKALMPGGGREYCVEKTIYLTTDRDCDPLFDTIDTVLLDVGTYDAYKEAHIREWSQFFSNFDIKILGDDRKDAQLRFATYHAVITGDRNNSIHSLSAKGLTGERYNQFVWWDCEIYQLPIFIHAFPEVAKHALIYRYDRLEEARENAKLEGCKGARYPFVSSLEGKEHVWIYARHPFLQVHITADIGFGIINYFINTLDYEFMELYGFEMLYEICRYWVSKVILKDGTYQLLGVTGTDEHHPYVDNDAYTNYIVQYVLQETILLDSQYSSTKVRDKIGITVNELKDIEQVSRLLYLPLEKSGLIPQFDGYFDLSRDLEVDGSGTGKNFQMKQAGLYHKSQVIKQPDVMLLFSYLNFEIKNSRYEENWDYYEKMCESSSSLTFPVHAICSADANRMLSFLNYFNETVNIDLLDIHHCAWQGVHAGCLSGAWYAIFRGLMGIVTRIDCIQINPKLIPFWQGVELSFIYQTKKIKATLNGNVFTLGSEDKKEISVYFQGKRYAFVDRLEVSF.

Residue 358–359 (WD) participates in substrate binding. The active-site Proton donor is Glu486. Residue 590–591 (KQ) participates in substrate binding.

It belongs to the glycosyl hydrolase 65 family. In terms of assembly, monomer.

It localises to the cytoplasm. It carries out the reaction 3-O-alpha-D-glucosyl-L-rhamnose + phosphate = beta-D-glucose 1-phosphate + L-rhamnopyranose. Its function is as follows. Phosphorylase showing strict alpha-1,3-regioselectivity and producing 3-O-alpha-D-glucopyranosyl-L-rhamnopyranose. Specific for L-rhamnose as acceptor and beta-D-glucose 1-phosphate as donor. Does not phosphorylate alpha,alpha-trehalose, kojibiose, nigerose, or maltose. This chain is 3-O-alpha-D-glucosyl-L-rhamnose phosphorylase, found in Lachnoclostridium phytofermentans (strain ATCC 700394 / DSM 18823 / ISDg) (Clostridium phytofermentans).